The primary structure comprises 156 residues: Small ribosomal subunit protein uS7 (156 aa).

The protein belongs to the universal ribosomal protein uS7 family. Part of the 30S ribosomal subunit. Contacts proteins S9 and S11.

One of the primary rRNA binding proteins, it binds directly to 16S rRNA where it nucleates assembly of the head domain of the 30S subunit. Is located at the subunit interface close to the decoding center, probably blocks exit of the E-site tRNA. The chain is Small ribosomal subunit protein uS7 from Trichormus variabilis (strain ATCC 29413 / PCC 7937) (Anabaena variabilis).